The chain runs to 216 residues: Fibroblast growth factor 19 (216 aa).

The signal sequence occupies residues 1–24 (MRSGCVVVHVWILAGLWLAVAGRP). Intrachain disulfides connect cysteine 58-cysteine 70 and cysteine 102-cysteine 120.

It belongs to the heparin-binding growth factors family. In terms of assembly, interacts with FGFR1, FGFR2, FGFR3 and FGFR4. Affinity between fibroblast growth factors (FGFs) and their receptors is increased by KL, KLB and heparan sulfate glycosaminoglycans that function as coreceptors. Interacts with KL; this interaction is direct. Interacts with KLB; this interaction is direct. Interacts with FGFR4 in the presence of heparin, KL or KLB. Interacts with MALRD1. In terms of tissue distribution, expressed in fetal brain, cartilage, retina, and adult gall bladder.

The protein localises to the secreted. Involved in the suppression of bile acid biosynthesis through down-regulation of CYP7A1 expression, following positive regulation of the JNK and ERK1/2 cascades. Stimulates glucose uptake in adipocytes. Activity requires the presence of KLB and FGFR4. The chain is Fibroblast growth factor 19 (FGF19) from Homo sapiens (Human).